The primary structure comprises 249 residues: Small ribosomal subunit protein eS6 (249 aa).

A compositionally biased stretch (basic and acidic residues) spans 216–229; the sequence is RMKEAKEKRQEQIA. The tract at residues 216–249 is disordered; it reads RMKEAKEKRQEQIAKRRRLSSLRASTSKSESSQK. Phosphoserine occurs at positions 235, 236, 240, 244, and 247. A compositionally biased stretch (low complexity) spans 236-249; it reads SLRASTSKSESSQK.

The protein belongs to the eukaryotic ribosomal protein eS6 family. In terms of assembly, component of the small ribosomal subunit. Part of the small subunit (SSU) processome, composed of more than 70 proteins and the RNA chaperone small nucleolar RNA (snoRNA) U3. In terms of processing, ribosomal protein S6 is the major substrate of protein kinases in eukaryote ribosomes. The phosphorylation is stimulated by growth factors, tumor promoting agents, and mitogens. It is dephosphorylated at growth arrest.

The protein resides in the cytoplasm. Its subcellular location is the nucleus. The protein localises to the nucleolus. Component of the 40S small ribosomal subunit. Plays an important role in controlling cell growth and proliferation through the selective translation of particular classes of mRNA. Part of the small subunit (SSU) processome, first precursor of the small eukaryotic ribosomal subunit. During the assembly of the SSU processome in the nucleolus, many ribosome biogenesis factors, an RNA chaperone and ribosomal proteins associate with the nascent pre-rRNA and work in concert to generate RNA folding, modifications, rearrangements and cleavage as well as targeted degradation of pre-ribosomal RNA by the RNA exosome. This Gallus gallus (Chicken) protein is Small ribosomal subunit protein eS6 (RPS6).